The sequence spans 82 residues: Costars family protein v1g158749 (82 aa).

It belongs to the costars family.

This chain is Costars family protein v1g158749, found in Nematostella vectensis (Starlet sea anemone).